The sequence spans 393 residues: Tryptophan synthase beta chain (393 aa).

Lys-85 carries the N6-(pyridoxal phosphate)lysine modification.

This sequence belongs to the TrpB family. In terms of assembly, tetramer of two alpha and two beta chains. Pyridoxal 5'-phosphate serves as cofactor.

It carries out the reaction (1S,2R)-1-C-(indol-3-yl)glycerol 3-phosphate + L-serine = D-glyceraldehyde 3-phosphate + L-tryptophan + H2O. It functions in the pathway amino-acid biosynthesis; L-tryptophan biosynthesis; L-tryptophan from chorismate: step 5/5. The beta subunit is responsible for the synthesis of L-tryptophan from indole and L-serine. The sequence is that of Tryptophan synthase beta chain (trpB) from Helicobacter pylori (strain ATCC 700392 / 26695) (Campylobacter pylori).